We begin with the raw amino-acid sequence, 318 residues long: NADH-ubiquinone oxidoreductase chain 1 (318 aa).

8 helical membrane-spanning segments follow: residues 2 to 22 (FMINVLSLIIPILLAVAFLTL), 69 to 89 (LMFIMAPILALTLALTMWIPL), 100 to 120 (LGVLFMLAMSSLAVYSILWSG), 146 to 166 (LAIILLSVLLMNGSFTLAMLI), 171 to 191 (YMWLIIPAWPLAMMWFISTLA), 223 to 243 (FFLAEYANIIMMNILTTILFF), 253 to 273 (ELYTINFTVKTLLLTTTFLWI), and 294 to 314 (LPLTLALCMWHVSLPIITASI).

Belongs to the complex I subunit 1 family. Core subunit of respiratory chain NADH dehydrogenase (Complex I) which is composed of 45 different subunits.

Its subcellular location is the mitochondrion inner membrane. The catalysed reaction is a ubiquinone + NADH + 5 H(+)(in) = a ubiquinol + NAD(+) + 4 H(+)(out). Functionally, core subunit of the mitochondrial membrane respiratory chain NADH dehydrogenase (Complex I) which catalyzes electron transfer from NADH through the respiratory chain, using ubiquinone as an electron acceptor. Essential for the catalytic activity and assembly of complex I. In Felis catus (Cat), this protein is NADH-ubiquinone oxidoreductase chain 1 (MT-ND1).